The following is a 1460-amino-acid chain: DNA-directed RNA polymerase III subunit RPC1 (1460 aa).

Zn(2+)-binding residues include cysteine 67, cysteine 70, cysteine 77, histidine 80, cysteine 107, cysteine 110, and cysteine 154. Mg(2+)-binding residues include aspartate 511, aspartate 513, and aspartate 515. A bridging helix region spans residues 858–870 (PPEFLFHAISGRE).

It belongs to the RNA polymerase beta' chain family. In terms of assembly, component of the RNA polymerase III (Pol III) complex consisting of 17 subunits.

It localises to the nucleus. It catalyses the reaction RNA(n) + a ribonucleoside 5'-triphosphate = RNA(n+1) + diphosphate. Its function is as follows. DNA-dependent RNA polymerase catalyzes the transcription of DNA into RNA using the four ribonucleoside triphosphates as substrates. Largest and catalytic core component of RNA polymerase III which synthesizes small RNAs, such as 5S rRNA and tRNAs. Forms the polymerase active center together with the second largest subunit. A single-stranded DNA template strand of the promoter is positioned within the central active site cleft of Pol III. A bridging helix emanates from RPC1 and crosses the cleft near the catalytic site and is thought to promote translocation of Pol III by acting as a ratchet that moves the RNA-DNA hybrid through the active site by switching from straight to bent conformations at each step of nucleotide addition. The polypeptide is DNA-directed RNA polymerase III subunit RPC1 (RPO31) (Saccharomyces cerevisiae (strain ATCC 204508 / S288c) (Baker's yeast)).